We begin with the raw amino-acid sequence, 265 residues long: Imidazole glycerol phosphate synthase subunit HisF (265 aa).

Active-site residues include Asp12 and Asp131.

This sequence belongs to the HisA/HisF family. In terms of assembly, heterodimer of HisH and HisF.

It is found in the cytoplasm. The enzyme catalyses 5-[(5-phospho-1-deoxy-D-ribulos-1-ylimino)methylamino]-1-(5-phospho-beta-D-ribosyl)imidazole-4-carboxamide + L-glutamine = D-erythro-1-(imidazol-4-yl)glycerol 3-phosphate + 5-amino-1-(5-phospho-beta-D-ribosyl)imidazole-4-carboxamide + L-glutamate + H(+). The protein operates within amino-acid biosynthesis; L-histidine biosynthesis; L-histidine from 5-phospho-alpha-D-ribose 1-diphosphate: step 5/9. In terms of biological role, IGPS catalyzes the conversion of PRFAR and glutamine to IGP, AICAR and glutamate. The HisF subunit catalyzes the cyclization activity that produces IGP and AICAR from PRFAR using the ammonia provided by the HisH subunit. This chain is Imidazole glycerol phosphate synthase subunit HisF, found in Alkalilimnicola ehrlichii (strain ATCC BAA-1101 / DSM 17681 / MLHE-1).